The sequence spans 354 residues: DNA ligase C2 (354 aa).

The N6-AMP-lysine intermediate role is filled by K29.

Belongs to the ATP-dependent DNA ligase family.

It catalyses the reaction ATP + (deoxyribonucleotide)n-3'-hydroxyl + 5'-phospho-(deoxyribonucleotide)m = (deoxyribonucleotide)n+m + AMP + diphosphate.. Its function is as follows. DNA ligase that seals nicks in double-stranded DNA during DNA replication, DNA recombination and DNA repair. Has weak intrinsic nick joining activities and accumulates DNA-adenylate. Acts as a backup for LigD in the Ku-LigD-dependent NHEJ pathway. This Mycolicibacterium smegmatis (strain ATCC 700084 / mc(2)155) (Mycobacterium smegmatis) protein is DNA ligase C2 (ligC2).